Reading from the N-terminus, the 64-residue chain is Putative antitoxin AF_1074 (64 aa).

It belongs to the UPF0165 family.

Possibly the antitoxin component of a type II toxin-antitoxin (TA) system. The protein is Putative antitoxin AF_1074 of Archaeoglobus fulgidus (strain ATCC 49558 / DSM 4304 / JCM 9628 / NBRC 100126 / VC-16).